The following is a 1803-amino-acid chain: Transposon Ty4-J Gag-Pol polyprotein (1803 aa).

A coiled-coil region spans residues Arg39–Asn115. Residues Asn382–Tyr502 are ty4 protease. The For protease activity; shared with dimeric partner role is filled by Asp415. The interval Ala540–Cys600 is integrase-type zinc finger-like. In terms of domain architecture, Integrase catalytic spans Thr620–Pro787. 2 residues coordinate Mg(2+): Asp631 and Asp696. The disordered stretch occupies residues Lys1224–Lys1250. Residues Arg1376–Asn1511 form the Reverse transcriptase Ty1/copia-type domain. Positions 1384, 1463, 1464, 1645, 1687, and 1721 each coordinate Mg(2+). Residues Asp1645–Lys1791 enclose the RNase H Ty1/copia-type domain.

In terms of assembly, the protease is a homodimer, whose active site consists of two apposed aspartic acid residues. In terms of processing, proteolytically processed into capsid protein (CA), Ty4 protease (PR), integrase (IN) and reverse transcriptase/ribonuclease H (RT) proteins. Initially, virus-like particles (VLPs) are composed of the structural unprocessed proteins Gag and Gag-Pol, and also contain the host initiator methionine tRNA (tRNA(i)-Met) which serves as a primer for minus-strand DNA synthesis, and a dimer of genomic Ty RNA. Processing of the polyproteins occurs within the particle and proceeds by an ordered pathway, called maturation. First, the protease (PR) is released by autocatalytic cleavage of the Gag-Pol polyprotein, and this cleavage is a prerequisite for subsequent processing at the remaining sites to release the mature structural and catalytic proteins. Maturation takes place prior to the RT reaction and is required to produce transposition-competent VLPs.

Its subcellular location is the cytoplasm. The protein localises to the nucleus. The enzyme catalyses DNA(n) + a 2'-deoxyribonucleoside 5'-triphosphate = DNA(n+1) + diphosphate. The catalysed reaction is Endonucleolytic cleavage to 5'-phosphomonoester.. Functionally, capsid protein (CA) is the structural component of the virus-like particle (VLP), forming the shell that encapsulates the retrotransposons dimeric RNA genome. In terms of biological role, the aspartyl protease (PR) mediates the proteolytic cleavages of the Gag and Gag-Pol polyproteins after assembly of the VLP. Reverse transcriptase/ribonuclease H (RT) is a multifunctional enzyme that catalyzes the conversion of the retro-elements RNA genome into dsDNA within the VLP. The enzyme displays a DNA polymerase activity that can copy either DNA or RNA templates, and a ribonuclease H (RNase H) activity that cleaves the RNA strand of RNA-DNA heteroduplexes during plus-strand synthesis and hydrolyzes RNA primers. The conversion leads to a linear dsDNA copy of the retrotransposon that includes long terminal repeats (LTRs) at both ends. Its function is as follows. Integrase (IN) targets the VLP to the nucleus, where a subparticle preintegration complex (PIC) containing at least integrase and the newly synthesized dsDNA copy of the retrotransposon must transit the nuclear membrane. Once in the nucleus, integrase performs the integration of the dsDNA into the host genome. The polypeptide is Transposon Ty4-J Gag-Pol polyprotein (TY4B-J) (Saccharomyces cerevisiae (strain ATCC 204508 / S288c) (Baker's yeast)).